We begin with the raw amino-acid sequence, 133 residues long: Core atranone cluster (CAC) protein 11 (133 aa).

The protein operates within mycotoxin biosynthesis. Its function is as follows. Part of the core atranone cluster (CAC) which products are predicted to catalyze most or all steps of mycotoxin atranone synthesis, starting from geranylgeranyl pyrophosphate (GGPP). The initial cyclization of GGPP to dolabellane is probably performed by the terpene cyclase ATR13. The Baeyer-Villiger oxidation near the end of the atranone synthesis, which converts atranones D and E to atranones F and G is predicted to be catalyzed by the monooxygenase ATR8. Of the CAC's other predicted gene products, the reducing PKS ATR6 might synthesize a polyketide chain. This polyketide is probably transferred onto the atranone backbone by the polyketide transferase ATR5. Other predicted CAC products include 4 oxygenases (ATR2, ATR3, ATR4, and ATR14), 3 short-chain reductases (ATR7, ATR9, and ATR10), and a methyltransferase (ATR12). These may all be involved in the various steps of atranone biosynthesis, although their specific roles must await experimental determination. The chain is Core atranone cluster (CAC) protein 11 from Stachybotrys chlorohalonatus (strain IBT 40285).